We begin with the raw amino-acid sequence, 522 residues long: Zinc finger and BTB domain-containing protein 18 (522 aa).

Residues 24-91 form the BTB domain; it reads CDCTVLVGDA…MYEGKLQFKD (68 aa). Residues 121 to 143 show a composition bias toward basic and acidic residues; that stretch reads ATTEADSTKKEEDASSCSDKVES. The segment at 121-166 is disordered; sequence ATTEADSTKKEEDASSCSDKVESLSDGSSHMAGDLPSDEDEGEDDK. Phosphoserine is present on Ser-157. Lys-273 participates in a covalent cross-link: Glycyl lysine isopeptide (Lys-Gly) (interchain with G-Cter in SUMO2). The tract at residues 310-427 is interaction with DNMT3A; the sequence is EPAHLAPLRE…TFSCMYTLKR (118 aa). C2H2-type zinc fingers lie at residues 370–392, 410–432, 438–460, and 466–489; these read FMCPLCNKVFPSPHILQIHLSTH, PTCSLCGKTFSCMYTLKRHERTH, YTCTQCGKSFQYSHNLSRHAVVH, and HACKWCERRFTQSGDLYRHIRKFH. Phosphoserine is present on residues Ser-516 and Ser-517.

This sequence belongs to the krueppel C2H2-type zinc-finger protein family. ZBTB18 subfamily. In terms of assembly, interacts with DNMT3A.

The protein resides in the nucleus. Its function is as follows. Transcriptional repressor that plays a role in various developmental processes such as myogenesis and brain development. Specifically binds the consensus DNA sequence 5'-[AC]ACATCTG[GT][AC]-3' which contains the E box core, and acts by recruiting chromatin remodeling multiprotein complexes. Plays a key role in myogenesis by directly repressing the expression of ID2 and ID3, 2 inhibitors of skeletal myogenesis. Also involved in controlling cell division of progenitor cells and regulating the survival of postmitotic cortical neurons. May also play a role in the organization of chromosomes in the nucleus. The protein is Zinc finger and BTB domain-containing protein 18 (Zbtb18) of Rattus norvegicus (Rat).